The primary structure comprises 98 residues: Small ribosomal subunit protein bS20 (98 aa).

The protein belongs to the bacterial ribosomal protein bS20 family.

Its function is as follows. Binds directly to 16S ribosomal RNA. The chain is Small ribosomal subunit protein bS20 from Parasynechococcus marenigrum (strain WH8102).